The following is a 121-amino-acid chain: Large ribosomal subunit protein uL18 (121 aa).

It belongs to the universal ribosomal protein uL18 family. In terms of assembly, part of the 50S ribosomal subunit; part of the 5S rRNA/L5/L18/L25 subcomplex. Contacts the 5S and 23S rRNAs.

Its function is as follows. This is one of the proteins that bind and probably mediate the attachment of the 5S RNA into the large ribosomal subunit, where it forms part of the central protuberance. This chain is Large ribosomal subunit protein uL18, found in Paracidovorax citrulli (strain AAC00-1) (Acidovorax citrulli).